We begin with the raw amino-acid sequence, 403 residues long: MTDLRLFTSESVTEGHPDKICDQISDSILDALLTQDPTSRAAVETLVTTGLVHVAGEVTTSGYVDIPQIVRDRIRDIGYDSSEVGFDGSNCGVTVSIGAQSPDIAQGVDRSYESRSGSASTDAHDLQGAGDQGLMFGYASRDTPVFMPLPIYLAHRLAERLAAVRHSGELAYLRPDGKTQVTIGYEGLVPRTVDTVVLSTQHGPQVSQEDLRREVEEHVIRPVLAAAAEIGIELDSRDATLLINPTGKFEIGGPKGDAGLTGRKIIVDTYGGFSRHGGGAFSGKDPSKVDRSAAYAMRWVAKNAVAAGLADRLEVQVAYAIGKAAPVGLYVETFGTAHVPEERIVRAIRETFDLRPAAIVERLDLLRPIYAQTAAYGHFGRELPDFTWEALDRVADLQSAAGL.

Position 16 (H16) interacts with ATP. D18 is a Mg(2+) binding site. Residue E44 coordinates K(+). Positions 57 and 100 each coordinate L-methionine. Residues 100–110 (QSPDIAQGVDR) form a flexible loop region. Residues 106–126 (QGVDRSYESRSGSASTDAHDL) are disordered. ATP is bound by residues 176–178 (DGK), 248–249 (KF), D257, 263–264 (RK), A280, and K284. D257 serves as a coordination point for L-methionine. K288 contacts L-methionine.

It belongs to the AdoMet synthase family. Homotetramer; dimer of dimers. The cofactor is Mg(2+). K(+) is required as a cofactor.

It is found in the cytoplasm. It carries out the reaction L-methionine + ATP + H2O = S-adenosyl-L-methionine + phosphate + diphosphate. Its pathway is amino-acid biosynthesis; S-adenosyl-L-methionine biosynthesis; S-adenosyl-L-methionine from L-methionine: step 1/1. In terms of biological role, catalyzes the formation of S-adenosylmethionine (AdoMet) from methionine and ATP. The overall synthetic reaction is composed of two sequential steps, AdoMet formation and the subsequent tripolyphosphate hydrolysis which occurs prior to release of AdoMet from the enzyme. The chain is S-adenosylmethionine synthase from Clavibacter michiganensis subsp. michiganensis (strain NCPPB 382).